The sequence spans 358 residues: Pseudouridylate synthase RPUSD4, mitochondrial (358 aa).

The N-terminal 12 residues, 1 to 12 (MRHAREVTFARL), are a transit peptide targeting the mitochondrion.

The protein belongs to the pseudouridine synthase RluA family.

Its subcellular location is the mitochondrion matrix. It localises to the nucleus. The protein resides in the cytoplasm. It carries out the reaction uridine in 5S rRNA = pseudouridine in 5S rRNA. The enzyme catalyses a uridine in tRNA = a pseudouridine in tRNA. The catalysed reaction is a uridine in mRNA = a pseudouridine in mRNA. Catalyzes uridine to pseudouridine isomerization (pseudouridylation) of different mitochondrial RNA substrates. Acts on position 1397 in 16S mitochondrial ribosomal RNA (16S mt-rRNA). This modification is required for the assembly of 16S mt-rRNA into a functional mitochondrial ribosome. Acts on position 39 in mitochondrial tRNA(Phe). Also catalyzes pseudouridylation of mRNAs in nucleus: acts as a regulator of pre-mRNA splicing by mediating pseudouridylation of pre-mRNAs at locations associated with alternatively spliced regions. Pseudouridylation of pre-mRNAs near splice sites directly regulates mRNA splicing and mRNA 3'-end processing. This is Pseudouridylate synthase RPUSD4, mitochondrial from Danio rerio (Zebrafish).